We begin with the raw amino-acid sequence, 107 residues long: UPF0060 membrane protein PSHAa1175 (107 aa).

The next 4 membrane-spanning stretches (helical) occupy residues 3–23 (IFGLFLITALAEIIGCYLPYL), 30–50 (SVWLLVPAALSLAIFAWLLSL), 60–80 (AAYGGVYIFMAILWLWAVDGI), and 84–104 (TWDLVGSGVALVGMAIIMFAP).

The protein belongs to the UPF0060 family.

Its subcellular location is the cell inner membrane. This chain is UPF0060 membrane protein PSHAa1175, found in Pseudoalteromonas translucida (strain TAC 125).